A 459-amino-acid chain; its full sequence is Bifunctional protein GlmU (459 aa).

The tract at residues 1-229 is pyrophosphorylase; it reads MSNFAIXLAA…FDESLGVNDR (229 aa). Residues 8–11, Lys22, Gln72, and 77–78 each bind UDP-N-acetyl-alpha-D-glucosamine; these read LAAG and GT. Residue Asp102 participates in Mg(2+) binding. UDP-N-acetyl-alpha-D-glucosamine contacts are provided by Gly139, Glu154, Asn169, and Asn227. Residue Asn227 coordinates Mg(2+). The interval 230–250 is linker; the sequence is VALATAESVMRRRINHKHMVN. An N-acetyltransferase region spans residues 251–459; that stretch reads GVSFVNPEAT…TRLPHHPKNQ (209 aa). UDP-N-acetyl-alpha-D-glucosamine-binding residues include Arg332 and Lys350. His362 acts as the Proton acceptor in catalysis. 2 residues coordinate UDP-N-acetyl-alpha-D-glucosamine: Tyr365 and Asn376. Acetyl-CoA-binding positions include Ala379, 385–386, Ser404, Ala422, and Arg439; that span reads NY.

In the N-terminal section; belongs to the N-acetylglucosamine-1-phosphate uridyltransferase family. This sequence in the C-terminal section; belongs to the transferase hexapeptide repeat family. As to quaternary structure, homotrimer. The cofactor is Mg(2+).

The protein localises to the cytoplasm. The catalysed reaction is alpha-D-glucosamine 1-phosphate + acetyl-CoA = N-acetyl-alpha-D-glucosamine 1-phosphate + CoA + H(+). It catalyses the reaction N-acetyl-alpha-D-glucosamine 1-phosphate + UTP + H(+) = UDP-N-acetyl-alpha-D-glucosamine + diphosphate. It participates in nucleotide-sugar biosynthesis; UDP-N-acetyl-alpha-D-glucosamine biosynthesis; N-acetyl-alpha-D-glucosamine 1-phosphate from alpha-D-glucosamine 6-phosphate (route II): step 2/2. It functions in the pathway nucleotide-sugar biosynthesis; UDP-N-acetyl-alpha-D-glucosamine biosynthesis; UDP-N-acetyl-alpha-D-glucosamine from N-acetyl-alpha-D-glucosamine 1-phosphate: step 1/1. Its pathway is bacterial outer membrane biogenesis; LPS lipid A biosynthesis. Catalyzes the last two sequential reactions in the de novo biosynthetic pathway for UDP-N-acetylglucosamine (UDP-GlcNAc). The C-terminal domain catalyzes the transfer of acetyl group from acetyl coenzyme A to glucosamine-1-phosphate (GlcN-1-P) to produce N-acetylglucosamine-1-phosphate (GlcNAc-1-P), which is converted into UDP-GlcNAc by the transfer of uridine 5-monophosphate (from uridine 5-triphosphate), a reaction catalyzed by the N-terminal domain. This chain is Bifunctional protein GlmU, found in Streptococcus pneumoniae serotype 19F (strain G54).